We begin with the raw amino-acid sequence, 145 residues long: D-aminoacyl-tRNA deacylase (145 aa).

The Gly-cisPro motif, important for rejection of L-amino acids signature appears at 137–138 (GP).

Belongs to the DTD family. In terms of assembly, homodimer.

The protein resides in the cytoplasm. It carries out the reaction glycyl-tRNA(Ala) + H2O = tRNA(Ala) + glycine + H(+). The catalysed reaction is a D-aminoacyl-tRNA + H2O = a tRNA + a D-alpha-amino acid + H(+). Functionally, an aminoacyl-tRNA editing enzyme that deacylates mischarged D-aminoacyl-tRNAs. Also deacylates mischarged glycyl-tRNA(Ala), protecting cells against glycine mischarging by AlaRS. Acts via tRNA-based rather than protein-based catalysis; rejects L-amino acids rather than detecting D-amino acids in the active site. By recycling D-aminoacyl-tRNA to D-amino acids and free tRNA molecules, this enzyme counteracts the toxicity associated with the formation of D-aminoacyl-tRNA entities in vivo and helps enforce protein L-homochirality. In Shewanella denitrificans (strain OS217 / ATCC BAA-1090 / DSM 15013), this protein is D-aminoacyl-tRNA deacylase.